The sequence spans 151 residues: uncharacterized protein (151 aa).

The span at 40–57 shows a compositional bias: polar residues; that stretch reads QMNRRNSENNTFDASNVG. Residues 40–125 are disordered; it reads QMNRRNSENN…KRQPHYAEPI (86 aa). Residues 83–110 show a composition bias toward low complexity; that stretch reads QRQNGRQHQHAGQQQPQHQHTQSQTRQT.

This is an uncharacterized protein from Bacillus subtilis (strain 168).